The sequence spans 555 residues: Formate--tetrahydrofolate ligase (555 aa).

Thr-65–Ser-72 provides a ligand contact to ATP.

The protein belongs to the formate--tetrahydrofolate ligase family.

The catalysed reaction is (6S)-5,6,7,8-tetrahydrofolate + formate + ATP = (6R)-10-formyltetrahydrofolate + ADP + phosphate. The protein operates within one-carbon metabolism; tetrahydrofolate interconversion. The protein is Formate--tetrahydrofolate ligase of Staphylococcus aureus (strain Mu3 / ATCC 700698).